The sequence spans 281 residues: Nucleoid occlusion protein (281 aa).

The tract at residues 1-24 is disordered; the sequence is MKHPFSRLFSFGEKEQEEMEEKQE. The segment at residues 145–164 is a DNA-binding region (H-T-H motif); that stretch reads EALAQRLGKGQSTIANKLRL.

Belongs to the ParB family.

The protein resides in the cytoplasm. The protein localises to the nucleoid. In terms of biological role, effects nucleoid occlusion by binding relatively nonspecifically to DNA and preventing the assembly of the division machinery in the vicinity of the nucleoid, especially under conditions that disturb the cell cycle. It helps to coordinate cell division and chromosome segregation by preventing the formation of the Z ring through the nucleoid, which would cause chromosome breakage. In Geobacillus kaustophilus (strain HTA426), this protein is Nucleoid occlusion protein.